The sequence spans 450 residues: 3-phosphoshikimate 1-carboxyvinyltransferase (450 aa).

Lys-23, Ser-24, and Arg-28 together coordinate 3-phosphoshikimate. Lys-23 is a binding site for phosphoenolpyruvate. Residues Gly-96 and Arg-124 each contribute to the phosphoenolpyruvate site. 3-phosphoshikimate contacts are provided by Ser-167, Ser-168, Gln-169, Ser-196, Glu-311, and His-340. Gln-169 contributes to the phosphoenolpyruvate binding site. Glu-311 (proton acceptor) is an active-site residue. Residues Arg-344, Arg-385, and Lys-410 each coordinate phosphoenolpyruvate. Residues 426-450 are disordered; the sequence is GQGWGYPQPRSGQRARRATGQGSGG.

It belongs to the EPSP synthase family. In terms of assembly, monomer.

The protein localises to the cytoplasm. The catalysed reaction is 3-phosphoshikimate + phosphoenolpyruvate = 5-O-(1-carboxyvinyl)-3-phosphoshikimate + phosphate. It functions in the pathway metabolic intermediate biosynthesis; chorismate biosynthesis; chorismate from D-erythrose 4-phosphate and phosphoenolpyruvate: step 6/7. Functionally, catalyzes the transfer of the enolpyruvyl moiety of phosphoenolpyruvate (PEP) to the 5-hydroxyl of shikimate-3-phosphate (S3P) to produce enolpyruvyl shikimate-3-phosphate and inorganic phosphate. The protein is 3-phosphoshikimate 1-carboxyvinyltransferase of Mycobacterium bovis (strain ATCC BAA-935 / AF2122/97).